A 380-amino-acid polypeptide reads, in one-letter code: 3-isopropylmalate dehydrogenase (380 aa).

An NAD(+)-binding site is contributed by 79-90 (GPEWAGVHPTPE). Residues arginine 97, arginine 107, arginine 136, and aspartate 229 each contribute to the substrate site. 3 residues coordinate Mg(2+): aspartate 229, aspartate 254, and aspartate 258. Residue 294–306 (GSAPDISGKGLAN) participates in NAD(+) binding.

Belongs to the isocitrate and isopropylmalate dehydrogenases family. Homodimer. Requires Mg(2+) as cofactor. The cofactor is Mn(2+).

Its subcellular location is the cytoplasm. It catalyses the reaction (2R,3S)-3-isopropylmalate + NAD(+) = 4-methyl-2-oxopentanoate + CO2 + NADH. Its pathway is amino-acid biosynthesis; L-leucine biosynthesis; L-leucine from 3-methyl-2-oxobutanoate: step 3/4. Functionally, catalyzes the oxidation of 3-carboxy-2-hydroxy-4-methylpentanoate (3-isopropylmalate) to 3-carboxy-4-methyl-2-oxopentanoate. The product decarboxylates to 4-methyl-2 oxopentanoate. In Hapsidospora chrysogena (Acremonium chrysogenum), this protein is 3-isopropylmalate dehydrogenase (LEU2).